The chain runs to 313 residues: Hsp90 co-chaperone Cdc37-like 1 (313 aa).

It belongs to the CDC37 family. As to quaternary structure, forms complexes with Hsp70 and Hsp90.

It localises to the cytoplasm. Co-chaperone that binds to numerous proteins and promotes their interaction with Hsp70 and Hsp90. The chain is Hsp90 co-chaperone Cdc37-like 1 (cdc37l1) from Danio rerio (Zebrafish).